The sequence spans 204 residues: Large ribosomal subunit protein uL13 (204 aa).

It belongs to the universal ribosomal protein uL13 family.

In Spodoptera frugiperda (Fall armyworm), this protein is Large ribosomal subunit protein uL13 (RpL13A).